We begin with the raw amino-acid sequence, 251 residues long: MNLISIPAFQDNYIWLLDNQQGHCIIVDPGEAQPVLETLDRLNLTPDAIVLTHHHHDHVGGVAQIVARYSGLKVYGPQETADKGANHIVHDGETIEINGQKFATIAVPGHTLGHVAFYSAPYLFCGDTIFSAGCGRLFEGTAEQMFNSFQQLAQLPDNTLICCAHEYTLSNLKFARAILPKDRHIETYQQQVEALRAKGQSSVPTTLQLERKINLFLRCHDTDLQRELGFHTPPEHLHSVFSELRLRKDNF.

Zn(2+) is bound by residues H53, H55, D57, H58, H110, D127, and H165.

The protein belongs to the metallo-beta-lactamase superfamily. Glyoxalase II family. As to quaternary structure, monomer. Requires Zn(2+) as cofactor.

It carries out the reaction an S-(2-hydroxyacyl)glutathione + H2O = a 2-hydroxy carboxylate + glutathione + H(+). It functions in the pathway secondary metabolite metabolism; methylglyoxal degradation; (R)-lactate from methylglyoxal: step 2/2. Functionally, thiolesterase that catalyzes the hydrolysis of S-D-lactoyl-glutathione to form glutathione and D-lactic acid. This Serratia proteamaculans (strain 568) protein is Hydroxyacylglutathione hydrolase.